The primary structure comprises 188 residues: tRNA(Phe) 7-((3-amino-3-carboxypropyl)-4-demethylwyosine(37)-N(4))-methyltransferase (188 aa).

The protein belongs to the TYW3 family.

It catalyses the reaction 4-demethyl-7-[(3S)-3-amino-3-carboxypropyl]wyosine(37) in tRNA(Phe) + S-adenosyl-L-methionine = 7-[(3S)-3-amino-3-carboxypropyl]wyosine(37) in tRNA(Phe) + S-adenosyl-L-homocysteine + H(+). Functionally, S-adenosyl-L-methionine-dependent methyltransferase that acts as a component of the wyosine derivatives biosynthesis pathway. Probably methylates N-4 position of wybutosine-86 to produce wybutosine-72. The protein is tRNA(Phe) 7-((3-amino-3-carboxypropyl)-4-demethylwyosine(37)-N(4))-methyltransferase of Aeropyrum pernix (strain ATCC 700893 / DSM 11879 / JCM 9820 / NBRC 100138 / K1).